The primary structure comprises 671 residues: MEPIEQQLTELRTTLRHHEYLYHVMDAPEIPDAEYDRLMRELRELEAQRPDLITPDSPTQRVGAAPLTAFNQIRHEVPMLSLDNVFDEESFLAFNKRVQDRLKSTENVIWCCELKLDGLAVSILYENGVLVSAATRGDGTTGEDITSNVRTIRAIPLKLHGDNIPARLEVRGEVFLPQAGFEKINEDARRTGGKVFANPRNAAAGSLRQLDPRITAKRPLTFFCYGVGILEGGELPDTHLGRLLQFKAWGLPVSDRVTLCDSPQAVLDFYRNVEKDRPTLGFDIDGVVIKVNSLALQEQLGFVARAPRWAVAFKFPAQEQMTFVRDVEFQVGRTGAITPVARLEPVQVAGVLVSNATLHNADEIEQLGLRIGDKVVIRRAGDVIPQVVNVVLSERPEETRPIVFPTHCPVCGSDVERVEGEAVTRCTGGLICGAQRKESLKHFVSRRAMDVDGMGDKIIDQLVEREYVHTPADLFRLTAGKLTGLDRMGPKSAQNVVNALEKAKATTFARFLYALGIREVGEATAAGLAAYFGTLEALQTATIDELQKVPDVGIVVATHVFNFFAEESNRDVIGQLLAEGVHWPAPVVINVQEIDSPFAGKTVVLTGSLSQMSRDDAKARLAALGAKVAGSVSKKTDLVIAGEAAGSKLAKAQELGITVIDEAEMIRLLGA.

Residues 32–36 (DAEYD), 81–82 (SL), and Glu113 each bind NAD(+). The active-site N6-AMP-lysine intermediate is Lys115. Positions 136, 173, 290, and 314 each coordinate NAD(+). Residues Cys408, Cys411, Cys426, and Cys432 each contribute to the Zn(2+) site. The 79-residue stretch at 593–671 (EIDSPFAGKT…EAEMIRLLGA (79 aa)) folds into the BRCT domain.

Belongs to the NAD-dependent DNA ligase family. LigA subfamily. It depends on Mg(2+) as a cofactor. Requires Mn(2+) as cofactor.

The catalysed reaction is NAD(+) + (deoxyribonucleotide)n-3'-hydroxyl + 5'-phospho-(deoxyribonucleotide)m = (deoxyribonucleotide)n+m + AMP + beta-nicotinamide D-nucleotide.. In terms of biological role, DNA ligase that catalyzes the formation of phosphodiester linkages between 5'-phosphoryl and 3'-hydroxyl groups in double-stranded DNA using NAD as a coenzyme and as the energy source for the reaction. It is essential for DNA replication and repair of damaged DNA. In Salmonella gallinarum (strain 287/91 / NCTC 13346), this protein is DNA ligase.